The chain runs to 98 residues: Cysteine-rich and transmembrane domain-containing protein WIH2 (98 aa).

A disordered region spans residues 1-77 (MSQYNQPPVG…PPQHQQQQSS (77 aa)). Residues 9-21 (VGVPPPQGYPPEG) are compositionally biased toward pro residues. The span at 37–55 (YPQQGYPPQGYPQQGYPQQ) shows a compositional bias: low complexity. The span at 56–70 (GYPPPYAPQYPPPPQ) shows a compositional bias: pro residues. Residues 75–92 (QSSPGFLEGCLAALCCCC) traverse the membrane as a helical segment.

It belongs to the CYSTM1 family. In terms of tissue distribution, expressed in floral organ primordia.

It is found in the membrane. Functionally, required for the promotion of megasporogenesis, or promotion of germ cell formation from somatic precursor cells. Acts redundantly with WIH1. Functions in a genetic pathway downstream of SPL/NZZ and WUS and together with TRN2 in promoting megasporogenesis. This chain is Cysteine-rich and transmembrane domain-containing protein WIH2, found in Arabidopsis thaliana (Mouse-ear cress).